The following is a 286-amino-acid chain: Phosphatidylserine decarboxylase proenzyme (286 aa).

Residues Asp-90, His-147, and Ser-253 each act as charge relay system; for autoendoproteolytic cleavage activity in the active site. The active-site Schiff-base intermediate with substrate; via pyruvic acid; for decarboxylase activity is the Ser-253. Pyruvic acid (Ser); by autocatalysis is present on Ser-253.

It belongs to the phosphatidylserine decarboxylase family. PSD-B subfamily. Prokaryotic type I sub-subfamily. In terms of assembly, heterodimer of a large membrane-associated beta subunit and a small pyruvoyl-containing alpha subunit. Pyruvate is required as a cofactor. Post-translationally, is synthesized initially as an inactive proenzyme. Formation of the active enzyme involves a self-maturation process in which the active site pyruvoyl group is generated from an internal serine residue via an autocatalytic post-translational modification. Two non-identical subunits are generated from the proenzyme in this reaction, and the pyruvate is formed at the N-terminus of the alpha chain, which is derived from the carboxyl end of the proenzyme. The autoendoproteolytic cleavage occurs by a canonical serine protease mechanism, in which the side chain hydroxyl group of the serine supplies its oxygen atom to form the C-terminus of the beta chain, while the remainder of the serine residue undergoes an oxidative deamination to produce ammonia and the pyruvoyl prosthetic group on the alpha chain. During this reaction, the Ser that is part of the protease active site of the proenzyme becomes the pyruvoyl prosthetic group, which constitutes an essential element of the active site of the mature decarboxylase.

The protein resides in the cell membrane. The enzyme catalyses a 1,2-diacyl-sn-glycero-3-phospho-L-serine + H(+) = a 1,2-diacyl-sn-glycero-3-phosphoethanolamine + CO2. The protein operates within phospholipid metabolism; phosphatidylethanolamine biosynthesis; phosphatidylethanolamine from CDP-diacylglycerol: step 2/2. Its function is as follows. Catalyzes the formation of phosphatidylethanolamine (PtdEtn) from phosphatidylserine (PtdSer). In Pseudoalteromonas atlantica (strain T6c / ATCC BAA-1087), this protein is Phosphatidylserine decarboxylase proenzyme.